We begin with the raw amino-acid sequence, 375 residues long: Odorant receptor 10 (375 aa).

6 helical membrane-spanning segments follow: residues 32-52, 58-78, 125-145, 167-187, 250-270, and 279-299; these read ISIIPVTVMTFFMFLDLGHSW, VIIKGYFAVLYFNAVLRTLIL, NLALGAIISTCFTVYPMFTGV, IIYLVQVVLTFPGCCMYIPFT, YICFVEFLSFGLMLCALLFLL, and IVIVAAYIFMIISQIFAFYWH.

This sequence belongs to the insect chemoreceptor superfamily. Heteromeric odorant receptor channel (TC 1.A.69) family. As to expression, expressed in female antenna, maxillary palp and proboscis. Expressed in female body. Expressed in male tissues.

It is found in the cell membrane. In terms of biological role, odorant receptor which complexes with Orco, a coreceptor, to form odorant-sensing units, providing sensitive and prolonged odorant signaling and calcium permeability. Can sense indole, 1-octen-3-ol, 3-methyindole and an insect repellent DEET. In Aedes albopictus (Asian tiger mosquito), this protein is Odorant receptor 10.